Consider the following 298-residue polypeptide: Protease HtpX homolog (298 aa).

A run of 2 helical transmembrane segments spans residues 16–36 (VMFGFGVLTLAIGAALGYLFW) and 38–58 (SWVSGTVIAAVVAVVYMLIMI). His144 serves as a coordination point for Zn(2+). Glu145 is a catalytic residue. Zn(2+) is bound at residue His148. Transmembrane regions (helical) follow at residues 159 to 179 (IALALSAAIGLLVNFASNWFW) and 197 to 217 (IIGLVISIFLIILAPLAASIA). Glu226 lines the Zn(2+) pocket.

The protein belongs to the peptidase M48B family. Zn(2+) serves as cofactor.

The protein resides in the cell membrane. The sequence is that of Protease HtpX homolog from Levilactobacillus brevis (strain ATCC 367 / BCRC 12310 / CIP 105137 / JCM 1170 / LMG 11437 / NCIMB 947 / NCTC 947) (Lactobacillus brevis).